The chain runs to 55 residues: Large ribosomal subunit protein bL33 (55 aa).

This sequence belongs to the bacterial ribosomal protein bL33 family.

In Zymomonas mobilis subsp. mobilis (strain ATCC 31821 / ZM4 / CP4), this protein is Large ribosomal subunit protein bL33.